Consider the following 228-residue polypeptide: MQKLKQQVFEANMDLPRYGLVTFTWGNVSAIDRERGLVVIKPSGVAYETMKADDMVVVDMSGKVVEGEYRPSSDTATHLELYRRYPSLGGIVHTHSTHATAWAQAGLAIPALGTTHADYFFGDIPCTRGLSEEEVQGEYELNTGKVIIETLGNAEPLHTPGIVVYQHGPFAWGKDAHDAVHNAVVMEEVAKMAWIARSINPQLNHIDSFLMNEHFMRKHGPNAYYGQK.

Residues 26-27, 43-44, and 72-73 contribute to the substrate site; these read GN, SG, and SS. Zn(2+) is bound by residues Asp-74, His-93, and His-95. Residue Asp-118 is the Proton donor/acceptor of the active site. His-167 is a binding site for Zn(2+). The active-site Proton donor/acceptor is the Tyr-225.

This sequence belongs to the aldolase class II family. AraD/FucA subfamily. It depends on Zn(2+) as a cofactor.

It carries out the reaction L-ribulose 5-phosphate = D-xylulose 5-phosphate. It functions in the pathway cofactor degradation; L-ascorbate degradation; D-xylulose 5-phosphate from L-ascorbate: step 4/4. Catalyzes the isomerization of L-ribulose 5-phosphate to D-xylulose 5-phosphate. Is involved in the anaerobic L-ascorbate utilization. The protein is L-ribulose-5-phosphate 4-epimerase UlaF of Shigella dysenteriae serotype 1 (strain Sd197).